The following is a 59-amino-acid chain: FNDEKGFGFITPESGPDLFVHFRAIQGNGFKSLKEGQKVTFIAVQGQKGMQADKVQAEA.

The CSD domain occupies 1–55; sequence FNDEKGFGFITPESGPDLFVHFRAIQGNGFKSLKEGQKVTFIAVQGQKGMQADKV.

It localises to the cytoplasm. Affects cell viability at low temperatures. The chain is Temperature acclimation protein A (tapA) from Pseudomonas fragi.